Here is a 159-residue protein sequence, read N- to C-terminus: Ribosomal RNA large subunit methyltransferase H (159 aa).

Residues leucine 76, glycine 108, and 127–132 contribute to the S-adenosyl-L-methionine site; that span reads FSKMTF.

This sequence belongs to the RNA methyltransferase RlmH family. As to quaternary structure, homodimer.

It is found in the cytoplasm. It catalyses the reaction pseudouridine(1915) in 23S rRNA + S-adenosyl-L-methionine = N(3)-methylpseudouridine(1915) in 23S rRNA + S-adenosyl-L-homocysteine + H(+). Specifically methylates the pseudouridine at position 1915 (m3Psi1915) in 23S rRNA. This Staphylococcus aureus (strain MSSA476) protein is Ribosomal RNA large subunit methyltransferase H.